Reading from the N-terminus, the 101-residue chain is Movement protein (101 aa).

Residues 30–50 (EVAILSFVALICFYLLYLWVL) form a helical membrane-spanning segment. Residues 75-101 (VDRSNPIPNLPAPPSQGNPGPFVPGTG) form a disordered region.

This sequence belongs to the mastrevirus movement protein family. As to quaternary structure, interacts with the capsid protein (CP). Part of a MP-CP-viral DNA complex.

Its subcellular location is the host membrane. In terms of biological role, involved in the viral transport within, and between cells. This chain is Movement protein, found in Maize streak virus genotype A (isolate South Africa) (MSV).